Reading from the N-terminus, the 669-residue chain is GEPGGVGPIGPPGERGAPGNRXXXXXXXXXXXXXXXXXXXXXXXXXXXXXXXXXXXXXXXXXXXXXXXXXXXXXXXXXXXXXXXXXXXXXXXXXXXXXXXXXXXXXXXXXXXXXXXXXXXXXXXXXXXXXXXXXXXXXXXXXXXXXXXXXXXXXXXXXXXXXXXXXXXXXXXXXXXXXXXXXXXXXXXXXXXXXXXXXXXXXXXXXXXXXXXXXXXXXXXXXXXXXXXXXXXXXXXXXXXXXXXXXXXXXXXXXXXXXXXXXXXXXXXXXXXXXXXXXXXXXXXXXXXXXXXXXXXXXXXXXXXXXXXXXXXXXXXXXXXXXXXGAPGERGETGPPGPAGFAGPPGADGQPGAKXXXXXXXXXXXXXXXXXXXXXXXXXXXXXXXXXXXXXXXXXXXXXXXXXXXXXXXXVGPPGANGNPGPAGPPGPAGKXXXXXXXXXXXXXXXXXXXXXXXXXXXXXXXXXXXXXXXXXXXXXXXXXXXXXXXXXXXXXXXXXXXXXXXXXXXXXXXXXXXXXXXXXXXXXXXXXXXXXXXXXXXXXXXXXXXXXXXXXXXXXXXXXXXXXXXXXXXXXXXXXXXXXXXXXXXXXXXXXXXXXXXXXXXXXXXXXXXXXXXXXXXXXXXXXXXXXXXXXXXXXXXXGFTGLQGLPGPPGTSGDQGASGPSGPAGPR.

Residues proline 3 and proline 12 each carry the 4-hydroxyproline modification. A compositionally biased stretch (low complexity) spans 318-327 (XXXXXXXGAP). Disordered stretches follow at residues 318–360 (XXXX…XXXX), 405–438 (XXXXXXVGPPGANGNPGPAGPPGPAGKXXXXXXX), and 638–669 (XXGFTGLQGLPGPPGTSGDQGASGPSGPAGPR). Proline 336 and proline 345 each carry 4-hydroxyproline. Composition is skewed to low complexity over residues 339–360 (AGFAGPPGADGQPGAKXXXXXX) and 405–420 (XXXXXXVGPPGANGNP). Proline 413 is modified (3-hydroxyproline). 3 positions are modified to 4-hydroxyproline: proline 414, proline 420, and proline 426. Low complexity-rich tracts occupy residues 429–438 (AGKXXXXXXX) and 638–647 (XXGFTGLQGL). At proline 648 the chain carries 4-hydroxyproline. A 3-hydroxyproline modification is found at proline 650.

This sequence belongs to the fibrillar collagen family. In terms of assembly, homotrimers of alpha 1(II) chains. Contains mostly 4-hydroxyproline. Prolines at the third position of the tripeptide repeating unit (G-X-P) are 4-hydroxylated in some or all of the chains. Post-translationally, contains 3-hydroxyproline at a few sites. This modification occurs on the first proline residue in the sequence motif Gly-Pro-Hyp, where Hyp is 4-hydroxyproline.

The protein resides in the secreted. Its subcellular location is the extracellular space. It localises to the extracellular matrix. Functionally, type II collagen is specific for cartilaginous tissues. It is essential for the normal embryonic development of the skeleton, for linear growth and for the ability of cartilage to resist compressive forces. This is Collagen alpha-1(II) chain from Mammut americanum (American mastodon).